Here is a 497-residue protein sequence, read N- to C-terminus: Cytochrome P450 monooxygenase 151 (497 aa).

The chain crosses the membrane as a helical span at residues 1-21; the sequence is MTDLVPVYYAFAGVVAALLFY. N-linked (GlcNAc...) asparagine glycosylation is found at asparagine 292 and asparagine 397. Cysteine 441 is a binding site for heme.

It belongs to the cytochrome P450 family. Heme is required as a cofactor.

It is found in the membrane. It participates in secondary metabolite biosynthesis. Cytochrome P450 monooxygenase that is able to use dehydroabietic acid and testosterone as substrates for oxidation, suggesting that the natural substrate(s) may be structurally related to steroid compounds. The sequence is that of Cytochrome P450 monooxygenase 151 from Postia placenta (strain ATCC 44394 / Madison 698-R) (Brown rot fungus).